Reading from the N-terminus, the 478-residue chain is Transcription factor PIF1 (478 aa).

Thr10 carries the post-translational modification Phosphothreonine; by CK2. Disordered stretches follow at residues 56–80 (LHTK…QPSS), 122–144 (VSQV…PVRN), 172–210 (VRES…GGGA), 230–294 (TSSS…LSER), and 391–478 (TQTH…HTTG). Positions 69–80 (LPSMDPQQQPSS) are enriched in low complexity. Over residues 179 to 189 (SPSATPSAAAS) the composition is skewed to low complexity. Thr197 is subject to Phosphothreonine; by CK2. The residue at position 202 (Ser202) is a Phosphoserine; by CK2. Basic and acidic residues-rich tracts occupy residues 238 to 272 (SEIE…ETKQ) and 284 to 294 (RAAEVHNLSER). A bHLH domain is found at 284-333 (RAAEVHNLSERKRRDRINERMKALQELIPRCNKSDKASMLDEAIEYMKSL). The segment covering 415–426 (PNQQYDPTSGQP) has biased composition (polar residues). A phosphoserine; by CK2 mark is found at Ser464, Ser465, Ser466, and Ser469. Basic and acidic residues predominate over residues 465–478 (SSKESEDHGNHTTG).

Homodimer. Interacts with the photoactivated conformer (Pfr) of phytochromes A and B, PHYA and PHYB. Also interacts with APRR1/TOC1. Binds to RGL2, RGA and FHY3 (via N-terminus). Associates to PTAC12/HMR/PAP5 which acts as a transcriptional coactivator. Binds directly to PCH1 and PCHL; this interaction facilitates its association with phyB and its subsequent light-induced degradation. Phosphorylated at Thr-10, Thr-197, Ser-202, Ser-464, Ser-465, Ser-466 and Ser-469 by CK2. Phosphorylated and ubiquitinated after an exposure to light (especially red and far-red), in a phytochrome-dependent manner. Modified proteins undergo a proteasome-dependent degradation. Its stability and degradation plays a central role in photomorphogenesis of seedlings. In terms of tissue distribution, mainly expressed in leaves, stems and seedlings, and, to a lower extent, in fruits, flowers and roots.

Its subcellular location is the nucleus. Its activity is regulated as follows. DNA-binding ability is inhibited by PCH1 and PCHL to negatively regulate the expressions of its target genes. Its function is as follows. Transcription activator. Negatively regulates chlorophyll biosynthesis and seed germination in the dark, and lightinduced degradation of PIF1 relieves this negative regulation to promote photomorphogenesis. Binds to the G-box motif (5'-CACGTG-3') found in many light-regulated promoters. Promotes the expression of SOM, and thus modulates responses to abscisic acid (ABA) and gibberellic acid (GA). This Arabidopsis thaliana (Mouse-ear cress) protein is Transcription factor PIF1.